Consider the following 177-residue polypeptide: Large ribosomal subunit protein uL6 (177 aa).

This sequence belongs to the universal ribosomal protein uL6 family. In terms of assembly, part of the 50S ribosomal subunit.

This protein binds to the 23S rRNA, and is important in its secondary structure. It is located near the subunit interface in the base of the L7/L12 stalk, and near the tRNA binding site of the peptidyltransferase center. The chain is Large ribosomal subunit protein uL6 from Polynucleobacter necessarius subsp. necessarius (strain STIR1).